Consider the following 221-residue polypeptide: Serine/arginine-rich splicing factor 9 (221 aa).

RRM domains lie at 14–89 and 111–187; these read GRIY…FPRA and FRVL…PERG. Lysine 36 is covalently cross-linked (Glycyl lysine isopeptide (Lys-Gly) (interchain with G-Cter in SUMO2)). Residues 187-198 show a composition bias toward low complexity; sequence GTSYGCSRSRSG. The interval 187–221 is disordered; it reads GTSYGCSRSRSGSRGRDSPYQSRGSPHYFSPFRPY. Residues 188–200 are interaction with SAFB1; sequence TSYGCSRSRSGSR. 6 positions are modified to phosphoserine: serine 189, serine 193, serine 195, serine 204, serine 208, and serine 211. A Phosphotyrosine modification is found at tyrosine 214. Serine 216 bears the Phosphoserine mark.

It belongs to the splicing factor SR family. As to quaternary structure, interacts with KHDRBS3. Interacts with HABP4. Interacts with NOL3/ARC/NOP30. Interacts with NSEP1/YB-1/YB1. Interacts with SAFB/SAFB1. Interacts with SRSF6/SFRS6. Interacts with TRA2B/SFRS10. Interacts with C1QBP. May also interact with DUSP11/PIR1. Post-translationally, extensively phosphorylated on serine residues in the RS domain.

It is found in the nucleus. Functionally, plays a role in constitutive splicing and can modulate the selection of alternative splice sites. Represses the splicing of MAPT/Tau exon 10. The polypeptide is Serine/arginine-rich splicing factor 9 (Srsf9) (Rattus norvegicus (Rat)).